A 617-amino-acid polypeptide reads, in one-letter code: Secretogranin-2 (617 aa).

A signal peptide spans 1 to 30 (MAGAKAYRLGAVLLLIHLIFLISGAEAASF). Residue Tyr153 is modified to Sulfotyrosine. Residues Ser176 and Ser270 each carry the phosphoserine modification. 2 stretches are compositionally biased toward basic and acidic residues: residues 261–286 (TQTQ…EMKR) and 295–307 (EENR…QLSE). The disordered stretch occupies residues 261 to 307 (TQTQEEVRDSKENTEKNEQINEEMKRSGQLGLPDEENRRESKDQLSE). Phosphoserine is present on residues Ser434, Ser532, Ser555, and Ser556.

Belongs to the chromogranin/secretogranin protein family. As to quaternary structure, interacts with Secretogranin III/SCG3.

The protein resides in the secreted. In terms of biological role, neuroendocrine protein of the granin family that regulates the biogenesis of secretory granules. The polypeptide is Secretogranin-2 (Scg2) (Mus musculus (Mouse)).